Reading from the N-terminus, the 374-residue chain is Probable ethanolamine kinase (374 aa).

The ATP site is built by Arg93 and Asp252.

The protein belongs to the choline/ethanolamine kinase family.

The enzyme catalyses ethanolamine + ATP = phosphoethanolamine + ADP + H(+). It functions in the pathway phospholipid metabolism; phosphatidylethanolamine biosynthesis; phosphatidylethanolamine from ethanolamine: step 1/3. Functionally, involved in phospholipid biosynthesis. Catalyzes the first step in phosphatidylethanolamine biosynthesis. This is Probable ethanolamine kinase (EMB1187) from Arabidopsis thaliana (Mouse-ear cress).